A 323-amino-acid polypeptide reads, in one-letter code: Transcription factor MafB (323 aa).

Lysine 32 is covalently cross-linked (Glycyl lysine isopeptide (Lys-Gly) (interchain with G-Cter in SUMO)). Residues 34-43 are compositionally biased toward basic and acidic residues; the sequence is EPLGRAERPG. 2 disordered regions span residues 34–78 and 116–210; these read EPLG…PTEQ and PVPQ…VEDR. Positions 54–76 are enriched in low complexity; sequence SLSSTPLSTPCSSVPSSPSFSPT. Composition is skewed to basic residues over residues 129–143 and 159–168; these read GAHH…HPHH and AHPHHHHHHQ. A compositionally biased stretch (low complexity) spans 192–201; the sequence is PHATASATAA. The interval 238 to 263 is basic motif; sequence RLKQKRRTLKNRGYAQSCRYKRVQQK. Residues 238-301 enclose the bZIP domain; the sequence is RLKQKRRTLK…DAHKVKCEKL (64 aa). Residues 266-287 are leucine-zipper; that stretch reads LENEKTQLIQQVEQLKQEVSRL. A Glycyl lysine isopeptide (Lys-Gly) (interchain with G-Cter in SUMO) cross-link involves residue lysine 297.

The protein belongs to the bZIP family. Maf subfamily. As to quaternary structure, homodimer or heterodimer with other bHLH-Zip transcription factors. Binds DNA as a homodimer or a heterodimer. Forms homodimers and heterodimers with FOS, FOSB and FOSL2, but not with JUN proteins (JUN, JUNB and JUND). Interacts with PAX6; the interaction is direct. Interacts with ETS1 and LRP1. Interacts with the intracellular cytoplasmic domain of LRP1 (LRPICD); the interaction results in a moderate reduction of MAFB transcriptional potential. Sumoylated. Sumoylation on Lys-32 and Lys-297 stimulates its transcriptional repression activity and promotes macrophage differentiation from myeloid progenitors.

It localises to the nucleus. Functionally, acts as a transcriptional activator or repressor. Plays a pivotal role in regulating lineage-specific hematopoiesis by repressing ETS1-mediated transcription of erythroid-specific genes in myeloid cells. Required for monocytic, macrophage, osteoclast, podocyte and islet beta cell differentiation. Involved in renal tubule survival and F4/80 maturation. Activates the insulin and glucagon promoters. Together with PAX6, transactivates weakly the glucagon gene promoter through the G1 element. SUMO modification controls its transcriptional activity and ability to specify macrophage fate. Binds element G1 on the glucagon promoter. Involved either as an oncogene or as a tumor suppressor, depending on the cell context. Required for the transcriptional activation of HOXB3 in the rhombomere r5 in the hindbrain. The chain is Transcription factor MafB (MAFB) from Macaca fascicularis (Crab-eating macaque).